The sequence spans 275 residues: Dermonecrotic toxin SpaSicTox-betaIIA3 (275 aa).

The active site involves histidine 5. Positions 25 and 27 each coordinate Mg(2+). Histidine 41 (nucleophile) is an active-site residue. Cystine bridges form between cysteine 45–cysteine 51 and cysteine 47–cysteine 190. Position 85 (aspartate 85) interacts with Mg(2+).

It belongs to the arthropod phospholipase D family. Class II subfamily. Requires Mg(2+) as cofactor. Expressed by the venom gland.

The protein localises to the secreted. The enzyme catalyses an N-(acyl)-sphingosylphosphocholine = an N-(acyl)-sphingosyl-1,3-cyclic phosphate + choline. It carries out the reaction an N-(acyl)-sphingosylphosphoethanolamine = an N-(acyl)-sphingosyl-1,3-cyclic phosphate + ethanolamine. The catalysed reaction is a 1-acyl-sn-glycero-3-phosphocholine = a 1-acyl-sn-glycero-2,3-cyclic phosphate + choline. It catalyses the reaction a 1-acyl-sn-glycero-3-phosphoethanolamine = a 1-acyl-sn-glycero-2,3-cyclic phosphate + ethanolamine. In terms of biological role, dermonecrotic toxins cleave the phosphodiester linkage between the phosphate and headgroup of certain phospholipids (sphingolipid and lysolipid substrates), forming an alcohol (often choline) and a cyclic phosphate. This toxin acts on sphingomyelin (SM). It may also act on ceramide phosphoethanolamine (CPE), lysophosphatidylcholine (LPC) and lysophosphatidylethanolamine (LPE), but not on lysophosphatidylserine (LPS), and lysophosphatidylglycerol (LPG). It acts by transphosphatidylation, releasing exclusively cyclic phosphate products as second products. Induces dermonecrosis, hemolysis, increased vascular permeability, edema, inflammatory response, and platelet aggregation. This chain is Dermonecrotic toxin SpaSicTox-betaIIA3, found in Sicarius patagonicus (Six-eyed sand spider).